Reading from the N-terminus, the 482-residue chain is Putative metallophosphoesterase F40B5.2 (482 aa).

The next 4 helical transmembrane spans lie at 15-35 (MNLK…SIAI), 129-149 (ALMM…YIFL), 156-176 (IAIT…FLLI), and 205-225 (CYHI…GLYT). Positions 256, 258, 288, 319, 421, and 423 each coordinate a divalent metal cation.

The protein belongs to the metallophosphoesterase superfamily. LOC643853 family.

It is found in the membrane. The chain is Putative metallophosphoesterase F40B5.2 from Caenorhabditis elegans.